The following is a 378-amino-acid chain: Ribosomal RNA large subunit methyltransferase G (378 aa).

The protein belongs to the methyltransferase superfamily. RlmG family.

It localises to the cytoplasm. The enzyme catalyses guanosine(1835) in 23S rRNA + S-adenosyl-L-methionine = N(2)-methylguanosine(1835) in 23S rRNA + S-adenosyl-L-homocysteine + H(+). Functionally, specifically methylates the guanine in position 1835 (m2G1835) of 23S rRNA. The protein is Ribosomal RNA large subunit methyltransferase G of Shewanella baltica (strain OS185).